Here is a 1134-residue protein sequence, read N- to C-terminus: Mediator of RNA polymerase II transcription subunit 12 (1134 aa).

The protein belongs to the Mediator complex subunit 12 family. As to quaternary structure, component of the srb8-11 complex which consists of rb8, srb9(TRAP240), srb10 and srb11. The srb8-11 complex associates with the Mediator complex thereby blocking association with RNA polymerase II and leading to reduced transcriptional activation by Mediator.

The protein localises to the nucleus. Functionally, component of the srb8-11 complex. The srb8-11 complex is a regulatory module of the Mediator complex which is itself involved in regulation of basal and activated RNA polymerase II-dependent transcription. The srb8-11 complex may be involved in the transcriptional repression of a subset of genes regulated by Mediator. It may inhibit the association of the Mediator complex with RNA polymerase II to form the holoenzyme complex. In Schizosaccharomyces pombe (strain 972 / ATCC 24843) (Fission yeast), this protein is Mediator of RNA polymerase II transcription subunit 12 (srb8).